An 83-amino-acid chain; its full sequence is Small ribosomal subunit protein bS20 (83 aa).

The protein belongs to the bacterial ribosomal protein bS20 family.

In terms of biological role, binds directly to 16S ribosomal RNA. In Lactobacillus delbrueckii subsp. bulgaricus (strain ATCC 11842 / DSM 20081 / BCRC 10696 / JCM 1002 / NBRC 13953 / NCIMB 11778 / NCTC 12712 / WDCM 00102 / Lb 14), this protein is Small ribosomal subunit protein bS20.